The sequence spans 353 residues: Photosystem II D2 protein (353 aa).

Threonine 2 bears the N-acetylthreonine mark. Threonine 2 bears the Phosphothreonine mark. A helical transmembrane segment spans residues 41-61 (CAYFSLGGWFTGTTFVTSWYT). A chlorophyll a-binding site is contributed by histidine 118. The chain crosses the membrane as a helical span at residues 125-141 (GFMLRQFELARSVQLRP). Residues glutamine 130 and asparagine 143 each contribute to the pheophytin a site. A helical transmembrane segment spans residues 153–166 (VFVSVFLIYPLGQS). Histidine 198 lines the chlorophyll a pocket. The chain crosses the membrane as a helical span at residues 208–228 (AALLCAIHGATVENTLFEDGD). A plastoquinone-binding residues include histidine 215 and phenylalanine 262. A Fe cation-binding site is contributed by histidine 215. Residue histidine 269 participates in Fe cation binding. A helical membrane pass occupies residues 279 to 295 (GLWMSAIGVVGLALNLR).

The protein belongs to the reaction center PufL/M/PsbA/D family. In terms of assembly, PSII is composed of 1 copy each of membrane proteins PsbA, PsbB, PsbC, PsbD, PsbE, PsbF, PsbH, PsbI, PsbJ, PsbK, PsbL, PsbM, PsbT, PsbX, PsbY, PsbZ, Psb30/Ycf12, at least 3 peripheral proteins of the oxygen-evolving complex and a large number of cofactors. It forms dimeric complexes. It depends on The D1/D2 heterodimer binds P680, chlorophylls that are the primary electron donor of PSII, and subsequent electron acceptors. It shares a non-heme iron and each subunit binds pheophytin, quinone, additional chlorophylls, carotenoids and lipids. There is also a Cl(-1) ion associated with D1 and D2, which is required for oxygen evolution. The PSII complex binds additional chlorophylls, carotenoids and specific lipids. as a cofactor.

Its subcellular location is the plastid. The protein localises to the chloroplast thylakoid membrane. It carries out the reaction 2 a plastoquinone + 4 hnu + 2 H2O = 2 a plastoquinol + O2. In terms of biological role, photosystem II (PSII) is a light-driven water:plastoquinone oxidoreductase that uses light energy to abstract electrons from H(2)O, generating O(2) and a proton gradient subsequently used for ATP formation. It consists of a core antenna complex that captures photons, and an electron transfer chain that converts photonic excitation into a charge separation. The D1/D2 (PsbA/PsbD) reaction center heterodimer binds P680, the primary electron donor of PSII as well as several subsequent electron acceptors. D2 is needed for assembly of a stable PSII complex. This chain is Photosystem II D2 protein, found in Physcomitrium patens (Spreading-leaved earth moss).